A 2507-amino-acid polypeptide reads, in one-letter code: Highly reducing polyketide synthase lcsB (2507 aa).

The Ketosynthase family 3 (KS3) domain occupies alanine 2 to serine 393. The tract at residues asparagine 399–glutamate 501 is disordered. 2 stretches are compositionally biased toward polar residues: residues serine 405 to proline 414 and asparagine 470 to threonine 488. Residues tryptophan 581–lysine 900 are malonyl-CoA:ACP transacylase (MAT) domain. Residues histidine 953–alanine 1080 form an N-terminal hotdog fold region. Residues histidine 953–aspartate 1232 form a dehydratase (DH) domain region. Residues histidine 953–glutamate 1234 form the PKS/mFAS DH domain. Histidine 984 (proton acceptor; for dehydratase activity) is an active-site residue. Residues alanine 1092–glutamate 1234 form a C-terminal hotdog fold region. The active-site Proton donor; for dehydratase activity is the aspartate 1151. A methyltransferase (CMet) domain region spans residues leucine 1402–proline 1570. Positions glycine 1793–valine 2105 are enoyl reductase (ER) (ER) domain. Positions serine 2130–glycine 2303 are ketoreductase (KR) domain. One can recognise a Carrier domain in the interval glutamate 2425 to leucine 2503. Serine 2463 bears the O-(pantetheine 4'-phosphoryl)serine mark.

The protein operates within secondary metabolite biosynthesis. In terms of biological role, highly reducing polyketide synthase; part of the gene cluster that mediates the biosynthesis of the lipopeptide antibiotics leucinostatins that show extensive biological activities, including antimalarial, antiviral, antibacterial, antifungal, and antitumor activities, as well as phytotoxic. Leucinostatin A contains nine amino acid residues, including the unusual amino acid 4-methyl-L-proline (MePro), 2-amino-6-hydroxy-4-methyl-8-oxodecanoic acid (AHyMeOA), 3-hydroxyleucine (HyLeu), alpha-aminoisobutyric acid (AIB), beta-Ala, a 4-methylhex-2-enoic acid at the N-terminus as well as a N1,N1-dimethylpropane-1,2-diamine (DPD) at the C-terminus. The biosynthesis of leucinostatins is probably initiated with the assembly of 4-methylhex-2-enoic acid by a reducing PKS. Two reducing polyketide synthases, lcsB and lcsC, have been identified in the cluster and it is not clear which is the one that assembles 4-methylhex-2-enoic acid since both contain KS, AT, DH, cMT, ER, KR and ACP domains. The polyketide residue might be transferred to the NRPS lcsA, mediated by two additional enzymes, the acyl-CoA ligase lcsD and the thioesterase lcsE. The linear polyketide carboxylic acid, which is released from PKS, is converted to a CoA thioester by lcsD, and then lcsE hydrolyzes the thiol bond and shuttles the polyketide intermediate to lcsA. The C domain of the first module catalyzed the condensation of 4-methylhex-2-enoic acid and MePro carried by domain A1, followed by successive condensations of nine amino acids to trigger the elongation of the linear peptide. A5 and A6 domains of lcsA are proposed to incorporate leucine, A2 AHyMeOA, and A3 incorporates HyLeu. A4, A7 and A8 incorporate AIB. The AHyMeOA in leucinostatin A activated by the A2 might be produced by the second PKS (lcsB or lcsC) present within the cluster. The MePro is probably produced via leucine cyclization and may originate from a separate pathway, independent of the cluster. Another nonproteinogenic amino acid, beta-Ala, could be produced by an aspartic acid decarboxylase also localized outside of the cluster. Two candidates are VFPBJ_01400 and VFPBJ_10476. The final peptide scaffold may be released by the NAD(P)H-dependent thioester reductase (TE) at the C-terminal region of lcsA. Transamination of the lcsA product by the transaminase lcsP may produce DPD at the C-terminus. Further hydroxylation steps performed alternatively by the cytochrome P450 monooxygenases lcsI, lcsK andr lcsN then yield the non-methylated leucinostatins precursor. It is also possible that leucines can be hydroxylated prior to their incorporation into the peptide. Varying extents of methylation then lead to the formation of leucinostatins A and B. The protein is Highly reducing polyketide synthase lcsB of Purpureocillium lilacinum (Paecilomyces lilacinus).